A 267-amino-acid polypeptide reads, in one-letter code: Translation initiation factor 2 subunit alpha (267 aa).

The S1 motif domain maps to 12 to 83 (GEYVIATVKE…RRKTVDVSLK (72 aa)).

The protein belongs to the eIF-2-alpha family. Heterotrimer composed of an alpha, a beta and a gamma chain.

Functionally, eIF-2 functions in the early steps of protein synthesis by forming a ternary complex with GTP and initiator tRNA. In Staphylothermus marinus (strain ATCC 43588 / DSM 3639 / JCM 9404 / F1), this protein is Translation initiation factor 2 subunit alpha.